The primary structure comprises 357 residues: Probable RNA methyltransferase Daro_1157 (357 aa).

Catalysis depends on E91, which acts as the Proton acceptor. A Radical SAM core domain is found at 94-320 (LLPRDGLCIS…TTVRNSAGQD (227 aa)). C101 and C325 are oxidised to a cystine. Residues C108, C112, and C115 each contribute to the [4Fe-4S] cluster site. S-adenosyl-L-methionine is bound by residues 153–154 (GE), S183, 206–208 (SLH), and N282. The active-site S-methylcysteine intermediate is C325.

Belongs to the radical SAM superfamily. RlmN family. Requires [4Fe-4S] cluster as cofactor.

It is found in the cytoplasm. This chain is Probable RNA methyltransferase Daro_1157, found in Dechloromonas aromatica (strain RCB).